A 460-amino-acid chain; its full sequence is Pyruvate dehydrogenase E1 component subunit beta (460 aa).

The 77-residue stretch at 2 to 78 (PVEILMPALS…KVNTPIAVLL (77 aa)) folds into the Lipoyl-binding domain. Lys-43 carries the post-translational modification N6-lipoyllysine. Residues 91–131 (KTEAPKAETPKPAAAEAPAASAAPVAAQPKADVPSDPAIPA) form a disordered region. The span at 100–121 (PKPAAAEAPAASAAPVAAQPKA) shows a compositional bias: low complexity. Glu-194 lines the thiamine diphosphate pocket.

Heterodimer of an alpha and a beta chain. It depends on (R)-lipoate as a cofactor. Requires thiamine diphosphate as cofactor.

It catalyses the reaction N(6)-[(R)-lipoyl]-L-lysyl-[protein] + pyruvate + H(+) = N(6)-[(R)-S(8)-acetyldihydrolipoyl]-L-lysyl-[protein] + CO2. In terms of biological role, the pyruvate dehydrogenase complex catalyzes the overall conversion of pyruvate to acetyl-CoA and CO(2). It contains multiple copies of three enzymatic components: pyruvate dehydrogenase (E1), dihydrolipoamide acetyltransferase (E2) and lipoamide dehydrogenase (E3). This chain is Pyruvate dehydrogenase E1 component subunit beta (pdhB), found in Rhizobium meliloti (strain 1021) (Ensifer meliloti).